We begin with the raw amino-acid sequence, 256 residues long: Hydroxyethylthiazole kinase (256 aa).

Met38 lines the substrate pocket. ATP-binding residues include Arg114 and Thr159. Gly186 provides a ligand contact to substrate.

The protein belongs to the Thz kinase family. Mg(2+) is required as a cofactor.

It carries out the reaction 5-(2-hydroxyethyl)-4-methylthiazole + ATP = 4-methyl-5-(2-phosphooxyethyl)-thiazole + ADP + H(+). The protein operates within cofactor biosynthesis; thiamine diphosphate biosynthesis; 4-methyl-5-(2-phosphoethyl)-thiazole from 5-(2-hydroxyethyl)-4-methylthiazole: step 1/1. In terms of biological role, catalyzes the phosphorylation of the hydroxyl group of 4-methyl-5-beta-hydroxyethylthiazole (THZ). This Streptococcus agalactiae serotype Ia (strain ATCC 27591 / A909 / CDC SS700) protein is Hydroxyethylthiazole kinase.